The sequence spans 153 residues: Troponin C (153 aa).

Ala1 is modified (blocked amino end (Ala)). 4 consecutive EF-hand domains span residues 10–45, 46–81, 86–121, and 122–153; these read EQVQ…LGQT, FEEK…FLVE, AMQE…LDDK, and LTED…MMTG. Asp59, Asp61, Ser63, Glu65, Glu70, Asp99, Asp110, Asp135, Asp137, Ser139, Thr141, and Glu146 together coordinate Ca(2+).

Belongs to the troponin C family.

Its function is as follows. Troponin is the central regulatory protein of striated muscle contraction. Tn consists of three components: Tn-I which is the inhibitor of actomyosin ATPase, Tn-T which contains the binding site for tropomyosin and Tn-C. The binding of calcium to Tn-C abolishes the inhibitory action of Tn on actin filaments. This chain is Troponin C, found in Tachypleus tridentatus (Japanese horseshoe crab).